A 651-amino-acid chain; its full sequence is Bromodomain-containing protein 7 (651 aa).

2 disordered regions span residues 36-133 (ELST…EVEQ) and 257-298 (KDKV…KKKD). Residues 58-69 (HKDRKRKKRKKG) are compositionally biased toward basic residues. The Nuclear localization signal signature appears at 65–96 (KRKKGEKQVPGEEKEKRKRKVKEDKRKRDREH). A compositionally biased stretch (basic and acidic residues) spans 70–105 (EKQVPGEEKEKRKRKVKEDKRKRDREHPDSEGEQEL). Residues 131-235 (VEQTPLQEAL…HSGMKILSQE (105 aa)) form the Bromo domain. The span at 271 to 298 (GSGKDKGEPVDGDTKAFKTPNKEHKKKD) shows a compositional bias: basic and acidic residues. Residues 533 to 564 (SEEAEIFQRKLDETTKLLRELQDAQNERLSTK) adopt a coiled-coil conformation.

The protein resides in the nucleus. It is found in the chromosome. In terms of biological role, acts both as coactivator and as corepressor. May play a role in chromatin remodeling. Participates in the Wnt signaling pathway. Transcriptional corepressor that down-regulates the expression of target genes. Binds to target promoters, leading to increased histone H3 acetylation. Coactivator for TP53-mediated activation of transcription of a set of target genes. Required for TP53-mediated cell-cycle arrest in response to oncogene activation. Inhibits cell cycle progression from G1 to S phase. The chain is Bromodomain-containing protein 7 (BRD7) from Gallus gallus (Chicken).